Reading from the N-terminus, the 132-residue chain is UPF0332 protein TM_1000 (132 aa).

This sequence belongs to the UPF0332 family.

The sequence is that of UPF0332 protein TM_1000 from Thermotoga maritima (strain ATCC 43589 / DSM 3109 / JCM 10099 / NBRC 100826 / MSB8).